A 224-amino-acid polypeptide reads, in one-letter code: Cytidylate kinase (224 aa).

12 to 20 (GPSGAGKGT) is an ATP binding site.

The protein belongs to the cytidylate kinase family. Type 1 subfamily.

The protein resides in the cytoplasm. The catalysed reaction is CMP + ATP = CDP + ADP. It carries out the reaction dCMP + ATP = dCDP + ADP. The chain is Cytidylate kinase from Aliivibrio salmonicida (strain LFI1238) (Vibrio salmonicida (strain LFI1238)).